Consider the following 20-residue polypeptide: Dahlein-5.1 (20 aa).

In terms of tissue distribution, expressed by the skin dorsal glands.

The protein localises to the secreted. Functionally, has no antimicrobial activity. Strongly inhibits the formation of NO by neuronal nitric oxide synthase at micromolar concentrations. Acts by a non-competitive mechanism, probably by binding to calcium/calmodulin and as a consequence blocking calmodulin attachment to nNOS. This is Dahlein-5.1 from Ranoidea dahlii (Dahl's aquatic frog).